A 460-amino-acid chain; its full sequence is tRNA (guanine(10)-N(2))-methyltransferase TRMT11 (460 aa).

A2 carries the N-acetylalanine modification.

Belongs to the class I-like SAM-binding methyltransferase superfamily. TRM11 methyltransferase family. As to quaternary structure, part of the heterodimeric TRMT11-TRM112 methyltransferase complex; this complex forms an active tRNA methyltransferase, where TRMT112 acts as an activator of the catalytic subunit TRMT11.

It localises to the cytoplasm. The enzyme catalyses guanosine(10) in tRNA + S-adenosyl-L-methionine = N(2)-methylguanosine(10) in tRNA + S-adenosyl-L-homocysteine + H(+). Catalytic subunit of the TRMT11-TRM112 methyltransferase complex, that specifically mediates the S-adenosyl-L-methionine-dependent N(2)-methylation of guanosine nucleotide at position 10 (m2G10) in tRNAs. This is one of the major tRNA (guanine-N(2))-methyltransferases. The polypeptide is tRNA (guanine(10)-N(2))-methyltransferase TRMT11 (Mus musculus (Mouse)).